We begin with the raw amino-acid sequence, 251 residues long: ATP synthase subunit a (251 aa).

6 helical membrane passes run 30–50, 86–106, 116–136, 145–165, 195–215, and 219–239; these read NSNE…VVAL, FFPF…LGLF, IAIT…VGFW, FFSP…IEIV, FMLM…IIPL, and IALT…FAIL.

This sequence belongs to the ATPase A chain family. As to quaternary structure, F-type ATPases have 2 components, CF(1) - the catalytic core - and CF(0) - the membrane proton channel. CF(1) has five subunits: alpha(3), beta(3), gamma(1), delta(1), epsilon(1). CF(0) has three main subunits: a(1), b(2) and c(9-12). The alpha and beta chains form an alternating ring which encloses part of the gamma chain. CF(1) is attached to CF(0) by a central stalk formed by the gamma and epsilon chains, while a peripheral stalk is formed by the delta and b chains.

It is found in the cell inner membrane. Its function is as follows. Key component of the proton channel; it plays a direct role in the translocation of protons across the membrane. This Acidiphilium cryptum (strain JF-5) protein is ATP synthase subunit a.